The following is a 487-amino-acid chain: Transcription factor GTE5, chloroplastic (487 aa).

Residues Met-1–Ser-32 constitute a chloroplast transit peptide. Disordered regions lie at residues Met-1–Ala-48, Ala-93–Lys-127, and Lys-400–Asn-487. Residues Lys-127–Ile-233 form the Bromo domain. The NET domain occupies Glu-320–Asn-401. Over residues Lys-400 to Ser-414 the composition is skewed to basic and acidic residues. Positions Val-415 to Thr-435 are enriched in polar residues. The span at Asn-451–Asn-487 shows a compositional bias: low complexity.

In terms of assembly, interacts with SIZ1 (via PHD domain). Post-translationally, sumoylated by SIZ1.

The protein localises to the plastid. It is found in the chloroplast. In Arabidopsis thaliana (Mouse-ear cress), this protein is Transcription factor GTE5, chloroplastic (GTE5).